Here is a 647-residue protein sequence, read N- to C-terminus: tRNA 5-methylaminomethyl-2-thiouridine biosynthesis bifunctional protein MnmC (647 aa).

A tRNA (mnm(5)s(2)U34)-methyltransferase region spans residues 1 to 227 (MLTWKNNLTP…KREMLIGSYS (227 aa)). Positions 256–647 (VGAGIAGTTL…ARFLYRKVRK (392 aa)) are FAD-dependent cmnm(5)s(2)U34 oxidoreductase.

The protein in the N-terminal section; belongs to the methyltransferase superfamily. tRNA (mnm(5)s(2)U34)-methyltransferase family. It in the C-terminal section; belongs to the DAO family. Requires FAD as cofactor.

It localises to the cytoplasm. The enzyme catalyses 5-aminomethyl-2-thiouridine(34) in tRNA + S-adenosyl-L-methionine = 5-methylaminomethyl-2-thiouridine(34) in tRNA + S-adenosyl-L-homocysteine + H(+). Catalyzes the last two steps in the biosynthesis of 5-methylaminomethyl-2-thiouridine (mnm(5)s(2)U) at the wobble position (U34) in tRNA. Catalyzes the FAD-dependent demodification of cmnm(5)s(2)U34 to nm(5)s(2)U34, followed by the transfer of a methyl group from S-adenosyl-L-methionine to nm(5)s(2)U34, to form mnm(5)s(2)U34. The polypeptide is tRNA 5-methylaminomethyl-2-thiouridine biosynthesis bifunctional protein MnmC (Leptospira interrogans serogroup Icterohaemorrhagiae serovar copenhageni (strain Fiocruz L1-130)).